The sequence spans 376 residues: Queuine tRNA-ribosyltransferase (376 aa).

The Proton acceptor role is filled by aspartate 89. Residues 89–93 (DSGGF), aspartate 143, glutamine 194, and glycine 221 each bind substrate. Residues 252–258 (GVGIPSN) form an RNA binding region. Residue aspartate 271 is the Nucleophile of the active site. The RNA binding; important for wobble base 34 recognition stretch occupies residues 276-280 (ARNGR). Residues cysteine 309, cysteine 311, cysteine 314, and histidine 340 each coordinate Zn(2+).

It belongs to the queuine tRNA-ribosyltransferase family. As to quaternary structure, homodimer. Within each dimer, one monomer is responsible for RNA recognition and catalysis, while the other monomer binds to the replacement base PreQ1. It depends on Zn(2+) as a cofactor.

It catalyses the reaction 7-aminomethyl-7-carbaguanine + guanosine(34) in tRNA = 7-aminomethyl-7-carbaguanosine(34) in tRNA + guanine. It participates in tRNA modification; tRNA-queuosine biosynthesis. Its function is as follows. Catalyzes the base-exchange of a guanine (G) residue with the queuine precursor 7-aminomethyl-7-deazaguanine (PreQ1) at position 34 (anticodon wobble position) in tRNAs with GU(N) anticodons (tRNA-Asp, -Asn, -His and -Tyr). Catalysis occurs through a double-displacement mechanism. The nucleophile active site attacks the C1' of nucleotide 34 to detach the guanine base from the RNA, forming a covalent enzyme-RNA intermediate. The proton acceptor active site deprotonates the incoming PreQ1, allowing a nucleophilic attack on the C1' of the ribose to form the product. After dissociation, two additional enzymatic reactions on the tRNA convert PreQ1 to queuine (Q), resulting in the hypermodified nucleoside queuosine (7-(((4,5-cis-dihydroxy-2-cyclopenten-1-yl)amino)methyl)-7-deazaguanosine). The polypeptide is Queuine tRNA-ribosyltransferase (Clostridium botulinum (strain Hall / ATCC 3502 / NCTC 13319 / Type A)).